Consider the following 114-residue polypeptide: Hydrogenase maturation factor HypA (114 aa).

His-2 lines the Ni(2+) pocket. Zn(2+) contacts are provided by Cys-74, Cys-77, Cys-90, and Cys-93.

Belongs to the HypA/HybF family.

Its function is as follows. Involved in the maturation of [NiFe] hydrogenases. Required for nickel insertion into the metal center of the hydrogenase. The chain is Hydrogenase maturation factor HypA from Campylobacter jejuni subsp. jejuni serotype O:2 (strain ATCC 700819 / NCTC 11168).